The sequence spans 219 residues: Ribosomal RNA small subunit methyltransferase G (219 aa).

Residues Gly-78, Phe-83, 129 to 130 (GE), and Arg-146 each bind S-adenosyl-L-methionine.

This sequence belongs to the methyltransferase superfamily. RNA methyltransferase RsmG family.

The protein resides in the cytoplasm. The enzyme catalyses guanosine(527) in 16S rRNA + S-adenosyl-L-methionine = N(7)-methylguanosine(527) in 16S rRNA + S-adenosyl-L-homocysteine. Functionally, specifically methylates the N7 position of guanine in position 527 of 16S rRNA. In Geotalea uraniireducens (strain Rf4) (Geobacter uraniireducens), this protein is Ribosomal RNA small subunit methyltransferase G.